Consider the following 276-residue polypeptide: Undecaprenyl-diphosphatase (276 aa).

A run of 8 helical transmembrane segments spans residues M1–V21, A39–F59, Y84–F104, L115–Y135, L159–G179, F188–A208, Q222–L242, and F253–L273.

Belongs to the UppP family.

It localises to the cell membrane. The catalysed reaction is di-trans,octa-cis-undecaprenyl diphosphate + H2O = di-trans,octa-cis-undecaprenyl phosphate + phosphate + H(+). Functionally, catalyzes the dephosphorylation of undecaprenyl diphosphate (UPP). Confers resistance to bacitracin. In Mycolicibacterium smegmatis (strain ATCC 700084 / mc(2)155) (Mycobacterium smegmatis), this protein is Undecaprenyl-diphosphatase.